The primary structure comprises 522 residues: tRNA-2-methylthio-N(6)-dimethylallyladenosine synthase (522 aa).

In terms of domain architecture, MTTase N-terminal spans 24–140; that stretch reads RTYEVKTYGC…LPTLLQRAEH (117 aa). [4Fe-4S] cluster is bound by residues Cys-33, Cys-69, Cys-103, Cys-177, Cys-181, and Cys-184. The Radical SAM core domain maps to 163-399; it reads RESAYAGWVS…MVVQEQVCEE (237 aa). One can recognise a TRAM domain in the interval 402–473; it reads QKLIGTTVEL…PFFLIADSGV (72 aa).

Belongs to the methylthiotransferase family. MiaB subfamily. Monomer. The cofactor is [4Fe-4S] cluster.

It is found in the cytoplasm. It catalyses the reaction N(6)-dimethylallyladenosine(37) in tRNA + (sulfur carrier)-SH + AH2 + 2 S-adenosyl-L-methionine = 2-methylsulfanyl-N(6)-dimethylallyladenosine(37) in tRNA + (sulfur carrier)-H + 5'-deoxyadenosine + L-methionine + A + S-adenosyl-L-homocysteine + 2 H(+). Catalyzes the methylthiolation of N6-(dimethylallyl)adenosine (i(6)A), leading to the formation of 2-methylthio-N6-(dimethylallyl)adenosine (ms(2)i(6)A) at position 37 in tRNAs that read codons beginning with uridine. In Corynebacterium glutamicum (strain ATCC 13032 / DSM 20300 / JCM 1318 / BCRC 11384 / CCUG 27702 / LMG 3730 / NBRC 12168 / NCIMB 10025 / NRRL B-2784 / 534), this protein is tRNA-2-methylthio-N(6)-dimethylallyladenosine synthase.